Here is a 32-residue protein sequence, read N- to C-terminus: Ranatuerin-2BYa (32 aa).

C27 and C32 are joined by a disulfide.

Expressed by the skin glands.

It is found in the secreted. Its function is as follows. Antibacterial activity against Gram-positive bacterium S.aureus and Gram-negative bacterium E.coli. Weak hemolytic activity. The polypeptide is Ranatuerin-2BYa (Rana boylii (Foothill yellow-legged frog)).